The following is a 143-amino-acid chain: Endoribonuclease YbeY (143 aa).

The Zn(2+) site is built by H113, H117, and D123.

The protein belongs to the endoribonuclease YbeY family. Zn(2+) serves as cofactor.

The protein resides in the cytoplasm. Its function is as follows. Single strand-specific metallo-endoribonuclease involved in late-stage 70S ribosome quality control and in maturation of the 3' terminus of the 16S rRNA. In Elusimicrobium minutum (strain Pei191), this protein is Endoribonuclease YbeY.